The sequence spans 290 residues: Inositol monophosphatase 2 (290 aa).

Glu83, Asp103, Ile105, and Asp106 together coordinate Mg(2+). Glu83 is a substrate binding site. Substrate is bound by residues 105–108 (IDGT), 207–209 (GSS), Gln226, and Asp233. Asp233 serves as a coordination point for Mg(2+).

It belongs to the inositol monophosphatase superfamily. As to quaternary structure, homodimer. Mg(2+) serves as cofactor. Mostly expressed in brain, small intestine, heart, kidney, and spleen (at protein level).

The protein resides in the cytoplasm. The catalysed reaction is a myo-inositol phosphate + H2O = myo-inositol + phosphate. The enzyme catalyses 1D-myo-inositol 1-phosphate + H2O = myo-inositol + phosphate. It carries out the reaction 1D-myo-inositol 2-phosphate + H2O = myo-inositol + phosphate. It catalyses the reaction 1D-myo-inositol 3-phosphate + H2O = myo-inositol + phosphate. The catalysed reaction is 1D-myo-inositol 4-phosphate + H2O = myo-inositol + phosphate. The enzyme catalyses 1D-myo-inositol 5-phosphate + H2O = myo-inositol + phosphate. It carries out the reaction 1D-myo-inositol 6-phosphate + H2O = myo-inositol + phosphate. It catalyses the reaction alpha-D-glucose 1-phosphate + H2O = D-glucose + phosphate. The catalysed reaction is glycerol 2-phosphate + H2O = glycerol + phosphate. The enzyme catalyses adenosine 2'-phosphate + H2O = adenosine + phosphate. It participates in polyol metabolism; myo-inositol biosynthesis; myo-inositol from D-glucose 6-phosphate: step 2/2. Phosphatase that can use myo-inositol monophosphates, myo-inositol 1,4-diphosphate, scyllo-inositol-1,4-diphosphate, glucose-1-phosphate, beta-glycerophosphate and 2'-AMP as substrates in vitro. No physiological substrates has been described yet. Has been implicated as the pharmacological target for lithium Li(+) action in brain. The sequence is that of Inositol monophosphatase 2 from Mus musculus (Mouse).